We begin with the raw amino-acid sequence, 242 residues long: MADENSTGPGNQPEATLAPEATNAEVTSQAPRRGRGGGGRDGGRGGRDGGRGRRDDRRPRDEDGGEELIEKLVHINRVSKTVKGGKRFGFAALVVVGDGKGRAGFGHGKAREVPEAISKATAAAKKAMIRVPLRDGRTLHHDGRGHFGAGNVTLRSAPAGTGIIAGGPMRAVFESLGVADVVTKSVGTSNPYNMIRATFEALGEQTSPKSVAQRRGKKVSDLIKRGGASDRAAEAEAAAVTE.

Over residues 1-14 the composition is skewed to polar residues; the sequence is MADENSTGPGNQPE. Residues 1–65 are disordered; it reads MADENSTGPG…DRRPRDEDGG (65 aa). The segment covering 41-65 has biased composition (basic and acidic residues); it reads DGGRGGRDGGRGRRDDRRPRDEDGG. One can recognise an S5 DRBM domain in the interval 68–131; it reads LIEKLVHINR…AAAKKAMIRV (64 aa). Residues 204–242 are disordered; sequence EQTSPKSVAQRRGKKVSDLIKRGGASDRAAEAEAAAVTE. Basic and acidic residues predominate over residues 218 to 234; that stretch reads KVSDLIKRGGASDRAAE.

The protein belongs to the universal ribosomal protein uS5 family. As to quaternary structure, part of the 30S ribosomal subunit. Contacts proteins S4 and S8.

With S4 and S12 plays an important role in translational accuracy. In terms of biological role, located at the back of the 30S subunit body where it stabilizes the conformation of the head with respect to the body. This Sphingopyxis alaskensis (strain DSM 13593 / LMG 18877 / RB2256) (Sphingomonas alaskensis) protein is Small ribosomal subunit protein uS5.